Reading from the N-terminus, the 607-residue chain is Elongation factor 4 (607 aa).

The tr-type G domain occupies 11-193 (ENIRNFSIIA…KIVEVVPAPD (183 aa)). GTP-binding positions include 23–28 (DHGKST) and 140–143 (NKID).

The protein belongs to the TRAFAC class translation factor GTPase superfamily. Classic translation factor GTPase family. LepA subfamily.

Its subcellular location is the cell membrane. The catalysed reaction is GTP + H2O = GDP + phosphate + H(+). Its function is as follows. Required for accurate and efficient protein synthesis under certain stress conditions. May act as a fidelity factor of the translation reaction, by catalyzing a one-codon backward translocation of tRNAs on improperly translocated ribosomes. Back-translocation proceeds from a post-translocation (POST) complex to a pre-translocation (PRE) complex, thus giving elongation factor G a second chance to translocate the tRNAs correctly. Binds to ribosomes in a GTP-dependent manner. The chain is Elongation factor 4 from Staphylococcus aureus (strain MW2).